The following is a 150-amino-acid chain: MNTLKMQRRIAAELLKCGENRVWIDPEKVDEVASAITREDIRRLIKEGVIRKKPIEGQSRYRARIRHEQKKKGRHRGPGSRKGKKTARMGKKELWIKTIRALRRELRKLKEQKKIDRKTYRMLYIRAKGGQFKNKHQLYLFLEEHGLLKK.

Positions 59-89 (SRYRARIRHEQKKKGRHRGPGSRKGKKTARM) are disordered. Residues 61-89 (YRARIRHEQKKKGRHRGPGSRKGKKTARM) are compositionally biased toward basic residues.

Belongs to the eukaryotic ribosomal protein eL19 family. As to quaternary structure, part of the 50S ribosomal subunit.

Binds to the 23S rRNA. This chain is Large ribosomal subunit protein eL19, found in Pyrococcus horikoshii (strain ATCC 700860 / DSM 12428 / JCM 9974 / NBRC 100139 / OT-3).